The sequence spans 426 residues: 3-phosphoshikimate 1-carboxyvinyltransferase (426 aa).

Residues K23, S24, and R28 each coordinate 3-phosphoshikimate. Residue K23 participates in phosphoenolpyruvate binding. Residues G96 and R124 each coordinate phosphoenolpyruvate. Residues T170, S171, Q172, S198, D314, and K341 each coordinate 3-phosphoshikimate. Q172 contacts phosphoenolpyruvate. D314 serves as the catalytic Proton acceptor. R345, R386, and K411 together coordinate phosphoenolpyruvate.

The protein belongs to the EPSP synthase family. Monomer.

The protein localises to the cytoplasm. It carries out the reaction 3-phosphoshikimate + phosphoenolpyruvate = 5-O-(1-carboxyvinyl)-3-phosphoshikimate + phosphate. It participates in metabolic intermediate biosynthesis; chorismate biosynthesis; chorismate from D-erythrose 4-phosphate and phosphoenolpyruvate: step 6/7. Functionally, catalyzes the transfer of the enolpyruvyl moiety of phosphoenolpyruvate (PEP) to the 5-hydroxyl of shikimate-3-phosphate (S3P) to produce enolpyruvyl shikimate-3-phosphate and inorganic phosphate. In Nostoc punctiforme (strain ATCC 29133 / PCC 73102), this protein is 3-phosphoshikimate 1-carboxyvinyltransferase.